A 620-amino-acid chain; its full sequence is Transcription factor GTE11 (620 aa).

The interval 1–35 is disordered; sequence MTVRNGGFPGDYNRNSFDSPGGCDDSPNASKDDET. The Bromo domain occupies 124 to 230; the sequence is TSTMLRMKQC…KFFEVRWKTI (107 aa). The NET domain maps to 270–351; that stretch reads NSLLEPAKRV…EFLRENQKKD (82 aa). Ser-417 is subject to Phosphoserine. The segment at 445–620 is transcription activation domain; the sequence is EKRYRAALLK…GNEVEEGEID (176 aa). Residues 470 to 544 adopt a coiled-coil conformation; sequence NQNEKRDPET…MEKSVEINEN (75 aa). Disordered stretches follow at residues 491–511 and 597–620; these read KKKE…ARRK and EDED…GEID.

Interacts with BT1, BT2 and BT4.

The protein localises to the nucleus. This chain is Transcription factor GTE11 (GTE11), found in Arabidopsis thaliana (Mouse-ear cress).